Here is a 120-residue protein sequence, read N- to C-terminus: Large ribosomal subunit protein bL12 (120 aa).

This sequence belongs to the bacterial ribosomal protein bL12 family. In terms of assembly, homodimer. Part of the ribosomal stalk of the 50S ribosomal subunit. Forms a multimeric L10(L12)X complex, where L10 forms an elongated spine to which 2 to 4 L12 dimers bind in a sequential fashion. Binds GTP-bound translation factors.

Forms part of the ribosomal stalk which helps the ribosome interact with GTP-bound translation factors. Is thus essential for accurate translation. This is Large ribosomal subunit protein bL12 from Clostridium botulinum (strain Alaska E43 / Type E3).